Reading from the N-terminus, the 305-residue chain is Glycine--tRNA ligase alpha subunit (305 aa).

It belongs to the class-II aminoacyl-tRNA synthetase family. In terms of assembly, tetramer of two alpha and two beta subunits.

Its subcellular location is the cytoplasm. The enzyme catalyses tRNA(Gly) + glycine + ATP = glycyl-tRNA(Gly) + AMP + diphosphate. This Streptococcus thermophilus (strain CNRZ 1066) protein is Glycine--tRNA ligase alpha subunit.